Consider the following 247-residue polypeptide: Triosephosphate isomerase (247 aa).

Residue 9 to 11 (NWK) participates in substrate binding. Histidine 94 functions as the Electrophile in the catalytic mechanism. Glutamate 165 acts as the Proton acceptor in catalysis. Substrate is bound by residues glycine 171, serine 209, and 230–231 (GG).

Belongs to the triosephosphate isomerase family. In terms of assembly, homodimer.

The protein resides in the cytoplasm. It carries out the reaction D-glyceraldehyde 3-phosphate = dihydroxyacetone phosphate. It functions in the pathway carbohydrate biosynthesis; gluconeogenesis. Its pathway is carbohydrate degradation; glycolysis; D-glyceraldehyde 3-phosphate from glycerone phosphate: step 1/1. In terms of biological role, involved in the gluconeogenesis. Catalyzes stereospecifically the conversion of dihydroxyacetone phosphate (DHAP) to D-glyceraldehyde-3-phosphate (G3P). In Albidiferax ferrireducens (strain ATCC BAA-621 / DSM 15236 / T118) (Rhodoferax ferrireducens), this protein is Triosephosphate isomerase.